We begin with the raw amino-acid sequence, 1513 residues long: Protein tincar (1513 aa).

Residues 1–77 lie on the Cytoplasmic side of the membrane; the sequence is MGGKHQGSGA…DSGSYLHLNS (77 aa). Residues 78–98 traverse the membrane as a helical segment; the sequence is LWSIWYGVMLTLFQGYLAMHG. Over 99-120 the chain is Extracellular; that stretch reads AYRFLGCSLIPWKIEPVAELNL. A helical transmembrane segment spans residues 121 to 141; it reads QIVLSGVVFILLPVFFTSAVF. Over 142–181 the chain is Cytoplasmic; the sequence is KVGNLANDGIKLATGARERRCTLSPHDGLEEESRGGTLRA. A helical membrane pass occupies residues 182–202; sequence LWTHGGPTAAFVHIVIALCLL. Residues 203–668 lie on the Extracellular side of the membrane; that stretch reads LPRLLLEARI…VAIFSQPPSA (466 aa). 3 disordered regions span residues 247 to 266, 354 to 373, and 383 to 532; these read TPFP…HQHG, ERQE…DEGV, and MPDF…SIHR. Over residues 427 to 466 the composition is skewed to low complexity; the sequence is ASSSSSSTTSTTTTTTTSTTTTAATTTSTRGTSTTTTTTT. Basic residues predominate over residues 478 to 507; sequence SAHHHHGKSRKHHKHHNKQRQQQPPRRHHV. Residues 523-532 are compositionally biased toward basic and acidic residues; sequence TTTRDSSIHR. A helical membrane pass occupies residues 669–689; the sequence is EFVNLLCALLVWSVRYPAVFW. Over 690–696 the chain is Cytoplasmic; it reads NTSKAFA. Residues 697–717 traverse the membrane as a helical segment; the sequence is CVFSLQMVVAALDIILGYVGI. Residues 718–736 lie on the Extracellular side of the membrane; it reads SNLYKLQIYAEAMPVHQPG. The chain crosses the membrane as a helical span at residues 737 to 757; sequence LILNAVVTLALYLLSTALVLA. Residues 758–787 lie on the Cytoplasmic side of the membrane; the sequence is SSMVMYLYGHGRLATRMRDRSIITLKTHQT. The chain crosses the membrane as a helical span at residues 788–808; that stretch reads WIYFAHCASLCFVLALAVVKA. The Extracellular portion of the chain corresponds to 809 to 826; that stretch reads PLLNDLSATYKNNLHCPT. A helical membrane pass occupies residues 827 to 847; it reads FLAALVGVTHLLLWIVIWLCL. The Cytoplasmic segment spans residues 848-1513; the sequence is TIKRRWHFKL…CGLYVTAQLH (666 aa). Composition is skewed to low complexity over residues 879–903 and 1060–1071; these read SSGQ…VNGG and QQQQQQQQQQRQ. 5 disordered regions span residues 879-913, 1045-1090, 1115-1155, 1173-1214, and 1231-1335; these read SSGQ…MSTA, EYDE…SGLG, ASTS…HSAG, EHHH…PHQH, and AHIA…DPAA. A compositionally biased stretch (pro residues) spans 1122-1149; that stretch reads PPQPSAQAPPPPPPLPIKGAPVPQPPAV. Low complexity-rich tracts occupy residues 1179 to 1208 and 1255 to 1285; these read LQHS…LQQQ and TPRS…SGVH. The segment covering 1286–1296 has biased composition (basic and acidic residues); that stretch reads SGEERELEVII. Pro residues predominate over residues 1303–1314; the sequence is KPPPRPPQPPIQ. Positions 1324-1335 are enriched in polar residues; the sequence is MRMSSFNADPAA.

Expression varies in tissues throughout development. At stage 5, expressed in the embryo dorsal region followed by expression in a striped pattern at stage 6. During gastrulation, expressed in ventral region and ventral nerve cord. Also detected in many neurons in the externa sensilla and chordotonal organ. At stage 16, expressed on the surface of the midgut. Additionally, expressed in a subset of cardioblasts (Tin+ subpopulation) during dorsal vessel formation. In third-instar larval tissues, expressed in the eye and antennal disks. In the antennal disks, expressed in the second antennal segments. In the eye disks, strongest expression found in the ocelli, and in the differentiating ommatidial cells. Also expressed in all cells within and in the vicinity of the morphogenetic furrow.

Its subcellular location is the membrane. In terms of biological role, involved in eye morphogenesis. May be essential for the normal differentiation of ommatidial cells. The protein is Protein tincar (tinc) of Drosophila melanogaster (Fruit fly).